A 423-amino-acid chain; its full sequence is ATP-citrate synthase alpha chain protein 1 (423 aa).

The citrate site is built by Asn-343, Thr-345, and Arg-376.

Belongs to the succinate/malate CoA ligase beta subunit family. As to quaternary structure, heterooctamer of 4 alpha and 4 beta chains. Expressed in trichomes, epidermal leaf cells, anther tapetal cells, stigma and in young vascular bundles of expanding leaves, cotyledons, roots, pedicel of flowers and siliques.

The protein localises to the cytoplasm. It localises to the cytosol. The enzyme catalyses oxaloacetate + acetyl-CoA + ADP + phosphate = citrate + ATP + CoA. ATP citrate-lyase is the primary enzyme responsible for the synthesis of cytosolic acetyl-CoA, used for the elongation of fatty acids and biosynthesis of isoprenoids, flavonoids and malonated derivatives. May supply substrate to the cytosolic acetyl-CoA carboxylase, which generates the malonyl-CoA used for the synthesis of a multitude of compounds, including very long chain fatty acids and flavonoids. Required for normal growth and development and elongation of C18 fatty acids to C20 to C24 fatty acids in seeds. In contrast to all known animal ACL enzymes having a homomeric structure, plant ACLs are composed of alpha and beta chains. This Arabidopsis thaliana (Mouse-ear cress) protein is ATP-citrate synthase alpha chain protein 1 (ACLA-1).